Reading from the N-terminus, the 406-residue chain is Putative nickel insertion protein (406 aa).

This sequence belongs to the LarC family.

In Methanosphaera stadtmanae (strain ATCC 43021 / DSM 3091 / JCM 11832 / MCB-3), this protein is Putative nickel insertion protein.